We begin with the raw amino-acid sequence, 370 residues long: S-adenosylmethionine:tRNA ribosyltransferase-isomerase (370 aa).

It belongs to the QueA family. In terms of assembly, monomer.

It localises to the cytoplasm. It catalyses the reaction 7-aminomethyl-7-carbaguanosine(34) in tRNA + S-adenosyl-L-methionine = epoxyqueuosine(34) in tRNA + adenine + L-methionine + 2 H(+). The protein operates within tRNA modification; tRNA-queuosine biosynthesis. In terms of biological role, transfers and isomerizes the ribose moiety from AdoMet to the 7-aminomethyl group of 7-deazaguanine (preQ1-tRNA) to give epoxyqueuosine (oQ-tRNA). This is S-adenosylmethionine:tRNA ribosyltransferase-isomerase from Prochlorococcus marinus (strain SARG / CCMP1375 / SS120).